A 264-amino-acid chain; its full sequence is Sirohydrochlorin cobaltochelatase (264 aa).

The Co-sirohydrochlorin site is built by glycine 45, isoleucine 84, isoleucine 85, aspartate 88, glutamate 89, and lysine 92. Histidine 145 (proton acceptor) is an active-site residue. Co(2+) contacts are provided by histidine 145 and glutamate 175. 3 residues coordinate Co-sirohydrochlorin: leucine 202, valine 203, and histidine 207. Histidine 207 contributes to the Co(2+) binding site.

It belongs to the CbiK family. As to quaternary structure, homotrimer.

It carries out the reaction Co-sirohydrochlorin + 2 H(+) = sirohydrochlorin + Co(2+). It catalyses the reaction Co-precorrin-2 + 3 H(+) = precorrin-2 + Co(2+). It participates in cofactor biosynthesis; adenosylcobalamin biosynthesis; cob(II)yrinate a,c-diamide from sirohydrochlorin (anaerobic route): step 1/10. Cobalt chelatase responsible for the insertion of cobalt during anaerobic cobalamin biosynthesis. Can catalyze the insertion of Co(2+) into either sirohydrochlorin or precorrin-2. It is not clear which is the natural substrate in Salmonella. In Salmonella typhimurium (strain LT2 / SGSC1412 / ATCC 700720), this protein is Sirohydrochlorin cobaltochelatase.